A 68-amino-acid polypeptide reads, in one-letter code: Neuronal regeneration-related protein (68 aa).

Positions 21–54 (MEGRLPKGRLPVPKEVNRKKNDETNAASLTPLGS) are disordered. Over residues 44–54 (TNAASLTPLGS) the composition is skewed to polar residues.

In terms of assembly, interacts with the latency-associated peptides (LAP) of TGFB1 and TGFB2; the interaction results in a decrease in TGFB autoinduction. Interacts with FLNA. In terms of processing, phosphorylated on Ser-59. Phosphorylation decreases stability and activity.

Its subcellular location is the cytoplasm. Functionally, may have roles in neural function and cellular differentiation. Ectopic expression promotes axonal regeneration, induces differentiation of fibroblast into myofibroblast, induces myofibroblast ameboid migration, augments motility of gliomas, and increases retinoic-acid regulation of lipid-droplet biogenesis. Down-regulates the expression of TGFB1 and TGFB2 but not of TGFB3. May play a role in the regulation of alveolar generation. This chain is Neuronal regeneration-related protein (NREP), found in Macaca fascicularis (Crab-eating macaque).